The following is a 304-amino-acid chain: MSASTVLPVRDRLRIAIQKSGRLTEPARRLLTSCGLSWRQSRDKLFCYGESLPVDLLLVRDDDIPGLIAQGVCDLGIVGRNELDEQAASRRRNGLPVPYQTLRGLHFGQCRLMLAVPEEWEWQDISQLTGKRIATSYPAILADWLQTHHIAAQIVELSGSVEIAPRLGTADLICDLVSSGATLTAHQLKPVIQIMESQAVLAGMIRQPADARAGLLAMLLRRIDGMVNLRDSNLLMFRAFQEHLDALTRLLPDADPLVQLPDDGSGTLRVQTMCHGTITWQRLEELERAGAQGLMVLTVERSLA.

This sequence belongs to the ATP phosphoribosyltransferase family. Long subfamily. The cofactor is Mg(2+).

Its subcellular location is the cytoplasm. The enzyme catalyses 1-(5-phospho-beta-D-ribosyl)-ATP + diphosphate = 5-phospho-alpha-D-ribose 1-diphosphate + ATP. Its pathway is amino-acid biosynthesis; L-histidine biosynthesis; L-histidine from 5-phospho-alpha-D-ribose 1-diphosphate: step 1/9. Its activity is regulated as follows. Feedback inhibited by histidine. Catalyzes the condensation of ATP and 5-phosphoribose 1-diphosphate to form N'-(5'-phosphoribosyl)-ATP (PR-ATP). Has a crucial role in the pathway because the rate of histidine biosynthesis seems to be controlled primarily by regulation of HisG enzymatic activity. The protein is ATP phosphoribosyltransferase of Xylella fastidiosa (strain M12).